A 313-amino-acid polypeptide reads, in one-letter code: MIIVTGGAGMIGSNIVKALNEAGINDILVVDNLKNGKKFKNLVDLDITDYMDRDDFLTQIMAGDDFGPIEAIFHEGACSATTEWDGKYMMLNNYEYSKELLHYCLDREIPFLYASSAATYGETETFVEEREYEGALNVYGYSKQQFDNYVRRLWKDAEEHGEQLSQITGFRYFNVYGPREDHKGSMASVAFHLNNQINAGENPKLFEGSGHFKRDFVYVGDVCKVNLWFLENGVSGIFNCGTGRAESFEEVAKAVVKHHNKGEIQTIPFPDHLKGAYQEFTQADLTKLRAAGCDVEFKTVAEGVAEYLTIQNS.

NADP(+) is bound by residues 10-11 (MI), 31-32 (DN), lysine 38, arginine 53, 75-79 (EGACS), and asparagine 92. Tyrosine 139 functions as the Proton acceptor in the catalytic mechanism. Lysine 143 is an NADP(+) binding site. Asparagine 174 is a binding site for substrate. Residues valine 175 and lysine 183 each coordinate NADP(+). Residue lysine 183 is the Proton acceptor of the active site. Residues serine 185, histidine 192, 206–209 (FEGS), arginine 214, and tyrosine 277 contribute to the substrate site.

This sequence belongs to the NAD(P)-dependent epimerase/dehydratase family. HldD subfamily. Homopentamer. NADP(+) is required as a cofactor.

It catalyses the reaction ADP-D-glycero-beta-D-manno-heptose = ADP-L-glycero-beta-D-manno-heptose. It functions in the pathway nucleotide-sugar biosynthesis; ADP-L-glycero-beta-D-manno-heptose biosynthesis; ADP-L-glycero-beta-D-manno-heptose from D-glycero-beta-D-manno-heptose 7-phosphate: step 4/4. The protein operates within bacterial outer membrane biogenesis; LPS core biosynthesis. Catalyzes the interconversion between ADP-D-glycero-beta-D-manno-heptose and ADP-L-glycero-beta-D-manno-heptose via an epimerization at carbon 6 of the heptose. In Vibrio parahaemolyticus serotype O3:K6 (strain RIMD 2210633), this protein is ADP-L-glycero-D-manno-heptose-6-epimerase.